We begin with the raw amino-acid sequence, 519 residues long: Xylose import ATP-binding protein XylG (519 aa).

ABC transporter domains are found at residues 6 to 245 (LTMR…VGRE) and 262 to 507 (LEAR…LTPA). Residue 38 to 45 (GENGAGKS) coordinates ATP.

This sequence belongs to the ABC transporter superfamily. Xylose importer (TC 3.A.1.2.4) family. As to quaternary structure, the complex is composed of two ATP-binding proteins (XylG), two transmembrane proteins (XylH) and a solute-binding protein (XylF).

Its subcellular location is the cell inner membrane. The catalysed reaction is D-xylose(out) + ATP + H2O = D-xylose(in) + ADP + phosphate + H(+). In terms of biological role, part of the ABC transporter complex XylFGH involved in xylose import. Responsible for energy coupling to the transport system. The polypeptide is Xylose import ATP-binding protein XylG (Burkholderia ambifaria (strain ATCC BAA-244 / DSM 16087 / CCUG 44356 / LMG 19182 / AMMD) (Burkholderia cepacia (strain AMMD))).